The sequence spans 282 residues: Large ribosomal subunit protein uL2 (282 aa).

Disordered regions lie at residues 31-55 (KRLTKPVRKSGGRNAHGKVTTRHIG) and 223-282 (LAMN…NTQR). Basic residues-rich tracts occupy residues 34–55 (TKPVRKSGGRNAHGKVTTRHIG) and 270–282 (VTRRRPGVRNTQR).

This sequence belongs to the universal ribosomal protein uL2 family. Part of the 50S ribosomal subunit. Forms a bridge to the 30S subunit in the 70S ribosome.

Its function is as follows. One of the primary rRNA binding proteins. Required for association of the 30S and 50S subunits to form the 70S ribosome, for tRNA binding and peptide bond formation. It has been suggested to have peptidyltransferase activity; this is somewhat controversial. Makes several contacts with the 16S rRNA in the 70S ribosome. The chain is Large ribosomal subunit protein uL2 from Anaeromyxobacter dehalogenans (strain 2CP-C).